Consider the following 164-residue polypeptide: ATP synthase subunit b (164 aa).

A helical membrane pass occupies residues 4–24; the sequence is LGINPTLFIAQLINFLLLIFI.

The protein belongs to the ATPase B chain family. In terms of assembly, F-type ATPases have 2 components, F(1) - the catalytic core - and F(0) - the membrane proton channel. F(1) has five subunits: alpha(3), beta(3), gamma(1), delta(1), epsilon(1). F(0) has four main subunits: a(1), b(2) and c(10-14). The alpha and beta chains form an alternating ring which encloses part of the gamma chain. F(1) is attached to F(0) by a central stalk formed by the gamma and epsilon chains, while a peripheral stalk is formed by the delta and b chains.

The protein localises to the cell membrane. Its function is as follows. F(1)F(0) ATP synthase produces ATP from ADP in the presence of a proton or sodium gradient. F-type ATPases consist of two structural domains, F(1) containing the extramembraneous catalytic core and F(0) containing the membrane proton channel, linked together by a central stalk and a peripheral stalk. During catalysis, ATP synthesis in the catalytic domain of F(1) is coupled via a rotary mechanism of the central stalk subunits to proton translocation. In terms of biological role, component of the F(0) channel, it forms part of the peripheral stalk, linking F(1) to F(0). The polypeptide is ATP synthase subunit b (Chloroflexus aurantiacus (strain ATCC 29366 / DSM 635 / J-10-fl)).